The following is a 389-amino-acid chain: Phosphopentomutase (389 aa).

6 residues coordinate Mn(2+): aspartate 9, aspartate 282, histidine 287, aspartate 323, histidine 324, and histidine 335.

Belongs to the phosphopentomutase family. It depends on Mn(2+) as a cofactor.

It localises to the cytoplasm. The enzyme catalyses 2-deoxy-alpha-D-ribose 1-phosphate = 2-deoxy-D-ribose 5-phosphate. The catalysed reaction is alpha-D-ribose 1-phosphate = D-ribose 5-phosphate. It functions in the pathway carbohydrate degradation; 2-deoxy-D-ribose 1-phosphate degradation; D-glyceraldehyde 3-phosphate and acetaldehyde from 2-deoxy-alpha-D-ribose 1-phosphate: step 1/2. Isomerase that catalyzes the conversion of deoxy-ribose 1-phosphate (dRib-1-P) and ribose 1-phosphate (Rib-1-P) to deoxy-ribose 5-phosphate (dRib-5-P) and ribose 5-phosphate (Rib-5-P), respectively. This is Phosphopentomutase from Pseudothermotoga lettingae (strain ATCC BAA-301 / DSM 14385 / NBRC 107922 / TMO) (Thermotoga lettingae).